The sequence spans 151 residues: Small ribosomal subunit protein bS6 (151 aa).

The disordered stretch occupies residues 96-151 (HEEGQSAMLTRRDDRRERDGDDRPRRREGGFDRGDRGDRGDRGPRRPRDNEAGEGA).

This sequence belongs to the bacterial ribosomal protein bS6 family.

Binds together with bS18 to 16S ribosomal RNA. This Brucella anthropi (strain ATCC 49188 / DSM 6882 / CCUG 24695 / JCM 21032 / LMG 3331 / NBRC 15819 / NCTC 12168 / Alc 37) (Ochrobactrum anthropi) protein is Small ribosomal subunit protein bS6.